The primary structure comprises 222 residues: Peptide methionine sulfoxide reductase MsrA (222 aa).

Cys-60 is a catalytic residue.

It belongs to the MsrA Met sulfoxide reductase family.

It carries out the reaction L-methionyl-[protein] + [thioredoxin]-disulfide + H2O = L-methionyl-(S)-S-oxide-[protein] + [thioredoxin]-dithiol. It catalyses the reaction [thioredoxin]-disulfide + L-methionine + H2O = L-methionine (S)-S-oxide + [thioredoxin]-dithiol. In terms of biological role, has an important function as a repair enzyme for proteins that have been inactivated by oxidation. Catalyzes the reversible oxidation-reduction of methionine sulfoxide in proteins to methionine. This Pseudomonas putida (strain ATCC 47054 / DSM 6125 / CFBP 8728 / NCIMB 11950 / KT2440) protein is Peptide methionine sulfoxide reductase MsrA.